A 189-amino-acid polypeptide reads, in one-letter code: Ribonuclease M5 2 (189 aa).

Positions 8–91 (SQVIVAEGRD…VFLKRDEAVP (84 aa)) constitute a Toprim domain. Mg(2+)-binding residues include glutamate 14, aspartate 60, and aspartate 62.

It belongs to the ribonuclease M5 family. Requires Mg(2+) as cofactor.

The protein localises to the cytoplasm. It carries out the reaction Endonucleolytic cleavage of RNA, removing 21 and 42 nucleotides, respectively, from the 5'- and 3'-termini of a 5S-rRNA precursor.. In terms of biological role, required for correct processing of both the 5' and 3' ends of 5S rRNA precursor. Cleaves both sides of a double-stranded region yielding mature 5S rRNA in one step. This chain is Ribonuclease M5 2, found in Ligilactobacillus salivarius (strain UCC118) (Lactobacillus salivarius).